Reading from the N-terminus, the 300-residue chain is Tyrosine recombinase XerC (300 aa).

One can recognise a Core-binding (CB) domain in the interval 1 to 86 (MESVLDAFDQ…AVKTFTAWAV (86 aa)). Positions 107–294 (TLPAVLRQDQ…TVARLRAVHD (188 aa)) constitute a Tyr recombinase domain. Catalysis depends on residues arginine 151, lysine 175, histidine 246, arginine 249, and histidine 272. The active-site O-(3'-phospho-DNA)-tyrosine intermediate is tyrosine 281.

The protein belongs to the 'phage' integrase family. XerC subfamily. In terms of assembly, forms a cyclic heterotetrameric complex composed of two molecules of XerC and two molecules of XerD.

It localises to the cytoplasm. Its function is as follows. Site-specific tyrosine recombinase, which acts by catalyzing the cutting and rejoining of the recombining DNA molecules. The XerC-XerD complex is essential to convert dimers of the bacterial chromosome into monomers to permit their segregation at cell division. It also contributes to the segregational stability of plasmids. The polypeptide is Tyrosine recombinase XerC (Mycobacterium sp. (strain JLS)).